Here is a 206-residue protein sequence, read N- to C-terminus: Protein PH0010 (206 aa).

The 195-residue stretch at 8 to 202 (EWGEFLVRLA…EEYPRGPIKR (195 aa)) folds into the AMMECR1 domain.

This chain is Protein PH0010, found in Pyrococcus horikoshii (strain ATCC 700860 / DSM 12428 / JCM 9974 / NBRC 100139 / OT-3).